A 37-amino-acid chain; its full sequence is MKVRPSVKKMCPKCKVIRRRGILRVICDNPRHKQRQG.

Belongs to the bacterial ribosomal protein bL36 family.

This is Large ribosomal subunit protein bL36 from Nitratidesulfovibrio vulgaris (strain DSM 19637 / Miyazaki F) (Desulfovibrio vulgaris).